The chain runs to 187 residues: Large ribosomal subunit protein bL17 (187 aa).

The tract at residues 122-187 is disordered; that stretch reads PKVRSSRTST…EADAAEKSDK (66 aa). Residues 127–144 show a composition bias toward low complexity; it reads SRTSTATAPAAAAPAAEA. 2 stretches are compositionally biased toward acidic residues: residues 145–157 and 165–180; these read PAEE…EETD and TPAE…VEAD.

This sequence belongs to the bacterial ribosomal protein bL17 family. As to quaternary structure, part of the 50S ribosomal subunit. Contacts protein L32.

The polypeptide is Large ribosomal subunit protein bL17 (Clavibacter michiganensis subsp. michiganensis (strain NCPPB 382)).